The primary structure comprises 301 residues: MYNVKKSIKLGIAPIGWRNDDIPEIGKENTYKQILSDAALTGFSGTEVGGCYPQDPAELNKELMLRGLEIPGQWFSSFIIRDGIASAMNAFEQHCAYLQAIHAYVAVVSEQTYSIQGIIDKCVYTEKPNFSDSEWQLLCEGLNALGKIANAHGLKLAFHHHMGTGVQTLPEVDRLMENTDPQFVHLLFDTGHIYVSDGDVMPLLSKHFDRIKHVHFKDVRNEKLKACRLAKKSFLNSFLDGVFTVPGDGNIDFKSVLAYLVGHQYSGWIVVEAEQDPKKYNPLEYAQKGKKHIDELLKNYL.

The protein belongs to the IolE/MocC family. The cofactor is glutathione. Co(2+) is required as a cofactor. It depends on Mn(2+) as a cofactor.

The enzyme catalyses scyllo-inosose = 3D-3,5/4-trihydroxycyclohexane-1,2-dione + H2O. Catalyzes the dehydration of inosose (2-keto-myo-inositol, 2KMI or 2,4,6/3,5-pentahydroxycyclohexanone) to 3D-(3,5/4)-trihydroxycyclohexane-1,2-dione (D-2,3-diketo-4-deoxy-epi-inositol). The chain is Inosose dehydratase from Salmonella typhimurium (strain LT2 / SGSC1412 / ATCC 700720).